Consider the following 444-residue polypeptide: Divalent metal cation transporter MntH (444 aa).

The next 11 membrane-spanning stretches (helical) occupy residues 39-59, 69-89, 109-128, 146-166, 175-195, 215-235, 264-284, 304-324, 346-366, 372-392, and 417-437; these read LLFA…GNFA, GYTL…FQAL, FSRP…AMAT, LPLI…LLFE, LVIG…MFIA, TALT…AVYL, VILA…MAAS, TPLL…TSGI, IPVW…ILAG, ALVI…IALI, and AAAI…GFTI.

The protein belongs to the NRAMP family.

The protein localises to the cell inner membrane. Functionally, h(+)-stimulated, divalent metal cation uptake system. In Granulibacter bethesdensis (strain ATCC BAA-1260 / CGDNIH1), this protein is Divalent metal cation transporter MntH.